Consider the following 349-residue polypeptide: Methylglutaconyl-CoA hydratase 1, mitochondrial (349 aa).

The transit peptide at 1 to 37 (MPPVSRILSYAPRVAIRPSSQLARPARAFAVGTVRYY) directs the protein to the mitochondrion.

The protein belongs to the enoyl-CoA hydratase/isomerase family. As to quaternary structure, homohexamer.

Its subcellular location is the mitochondrion. The enzyme catalyses (3S)-3-hydroxy-3-methylglutaryl-CoA = 3-methyl-(2E)-glutaconyl-CoA + H2O. It functions in the pathway amino-acid degradation; L-leucine degradation; (S)-3-hydroxy-3-methylglutaryl-CoA from 3-isovaleryl-CoA: step 3/3. Its function is as follows. 3-methylglutaconyl-CoA hydratase that catalyzes the fifth step in the leucine degradation pathway, the reversible hydration of 3-methylglutaconyl-CoA (3-MG-CoA) to 3-hydroxy-3-methylglutaryl-CoA (HMG-CoA). Involved in vegetative growth, conidiation and in the stress response. Controls mitochondrial morphology and mitophagy, which are critical for the infectious growth of the pathogen. This chain is Methylglutaconyl-CoA hydratase 1, mitochondrial, found in Pyricularia oryzae (strain 70-15 / ATCC MYA-4617 / FGSC 8958) (Rice blast fungus).